Consider the following 105-residue polypeptide: Protein ORFg in retron Ec67 (105 aa).

This chain is Protein ORFg in retron Ec67, found in Escherichia coli.